Reading from the N-terminus, the 379-residue chain is Alternative oxidase 1, mitochondrial (379 aa).

Residues 33 to 50 are compositionally biased toward low complexity; it reads TTTTSTKSRSSTSTAATT. A disordered region spans residues 33 to 76; sequence TTTTSTKSRSSTSTAATTVGNSNPKSPIDEDNLEKPGTIPTKHK. Residues E180, E219, and H222 each coordinate Fe cation. Residues 234–256 traverse the membrane as a helical segment; sequence WFTRSIIYIGQGVFTNIFFLVYL. 4 residues coordinate Fe cation: E270, E271, E326, and H329.

This sequence belongs to the alternative oxidase family. It depends on Fe cation as a cofactor.

Its subcellular location is the mitochondrion inner membrane. Catalyzes cyanide-resistant oxygen consumption. May increase respiration when the cytochrome respiratory pathway is restricted, or in response to low temperatures. The polypeptide is Alternative oxidase 1, mitochondrial (AOX1) (Candida albicans (Yeast)).